We begin with the raw amino-acid sequence, 872 residues long: Metabotropic glutamate receptor 2 (872 aa).

An N-terminal signal peptide occupies residues 1-18; it reads MESLLRFLALLLLRGAVA. Over 19 to 568 the chain is Extracellular; that stretch reads EGPAKKVLTL…EYIRWGDAWA (550 aa). A disulfide bridge connects residues Cys-50 and Cys-92. 5 residues coordinate L-glutamate: Arg-57, Arg-61, Ser-145, Ala-166, and Thr-168. Asn-203 and Asn-286 each carry an N-linked (GlcNAc...) asparagine glycan. 7 cysteine pairs are disulfide-bonded: Cys-234–Cys-518, Cys-355–Cys-362, Cys-400–Cys-407, Cys-500–Cys-519, Cys-504–Cys-522, Cys-525–Cys-537, and Cys-540–Cys-553. Residue Asp-295 coordinates L-glutamate. Asn-338 is a glycosylation site (N-linked (GlcNAc...) asparagine). Lys-377 serves as a coordination point for L-glutamate. N-linked (GlcNAc...) asparagine glycosylation occurs at Asn-402. Asn-547 carries N-linked (GlcNAc...) asparagine glycosylation. A helical membrane pass occupies residues 569-589; the sequence is VGPVTIACLGALATLFVLGVF. The Cytoplasmic portion of the chain corresponds to 590-604; it reads VRHNATPVVKASGRE. A helical transmembrane segment spans residues 605–625; sequence LCYILLGGVFLCYCMTFIFIA. Over 626-633 the chain is Extracellular; it reads KPSTAVCT. A disulfide bridge connects residues Cys-632 and Cys-721. A helical membrane pass occupies residues 634–651; that stretch reads LRRLGLGTAFSVCYSALL. Residues 652–679 are Cytoplasmic-facing; sequence TKTNRIARIFGGAREGAQRPRFISPASQ. Residues 677–685 are important for interaction with HTR2A; that stretch reads ASQVAICLA. Residues 680–700 traverse the membrane as a helical segment; that stretch reads VAICLALISGQLLIVAAWLVV. The Extracellular segment spans residues 701–726; the sequence is EAPGIGKETAPERREVVTLRCNHRDA. The helical transmembrane segment at 727–747 threads the bilayer; it reads SMLGSLAYNVLLIALCTLYAF. Residues 748-760 are Cytoplasmic-facing; sequence KTRKCPENFNEAK. The chain crosses the membrane as a helical span at residues 761 to 781; sequence FIGFTMYTTCIIWLAFLPIFY. At 782 to 798 the chain is on the extracellular side; the sequence is VTSSDYRVQTTTMCVSV. A helical transmembrane segment spans residues 799–819; that stretch reads SLSGSVVLGCLFAPKLHIILF. The Cytoplasmic segment spans residues 820 to 872; the sequence is QPQKNVVSHRAPTSRFGSAAPRASANLGQGSGSQLVPTVCNGREVVDSTTSSL.

It belongs to the G-protein coupled receptor 3 family. Forms heterodimers with GRM3 or GRM4. Interacts with GNAI1. Interacts with TAMALIN. Interacts with HTR2A. As to expression, detected in neurons in brain cortex (at protein level).

It localises to the cell membrane. The protein localises to the synapse. Its subcellular location is the cell projection. The protein resides in the dendrite. In terms of biological role, dimeric G protein-coupled receptor which is activated by the excitatory neurotransmitter L-glutamate. Plays critical roles in modulating synaptic transmission and neuronal excitability. Upon activation by glutamate, inhibits presynaptic calcium channels, reducing further glutamate release and dampening excitatory signaling. Mechanistically, ligand binding causes a conformation change that triggers signaling via guanine nucleotide-binding proteins (G proteins) and modulates the activity of down-stream effectors, such as adenylate cyclase. May mediate suppression of neurotransmission or may be involved in synaptogenesis or synaptic stabilization. The chain is Metabotropic glutamate receptor 2 (Grm2) from Mus musculus (Mouse).